The following is a 340-amino-acid chain: Phosphoribosylformylglycinamidine cyclo-ligase (340 aa).

The protein belongs to the AIR synthase family.

It is found in the cytoplasm. It catalyses the reaction 2-formamido-N(1)-(5-O-phospho-beta-D-ribosyl)acetamidine + ATP = 5-amino-1-(5-phospho-beta-D-ribosyl)imidazole + ADP + phosphate + H(+). Its pathway is purine metabolism; IMP biosynthesis via de novo pathway; 5-amino-1-(5-phospho-D-ribosyl)imidazole from N(2)-formyl-N(1)-(5-phospho-D-ribosyl)glycinamide: step 2/2. The polypeptide is Phosphoribosylformylglycinamidine cyclo-ligase (Streptococcus pneumoniae serotype 19F (strain G54)).